A 638-amino-acid chain; its full sequence is Plasma kallikrein (638 aa).

Positions 1-19 (MILFNRVGYFVSLFATVSC) are cleaved as a signal peptide. 4 Apple domains span residues 21–104 (CMTQ…LKQC), 111–194 (CHRD…LKSC), 201–284 (CPMD…LLTC), and 292–375 (CHSK…LRLC). 18 cysteine pairs are disulfide-bonded: cysteine 21/cysteine 104, cysteine 47/cysteine 77, cysteine 51/cysteine 57, cysteine 111/cysteine 194, cysteine 137/cysteine 166, cysteine 141/cysteine 147, cysteine 201/cysteine 284, cysteine 227/cysteine 256, cysteine 231/cysteine 237, cysteine 292/cysteine 375, cysteine 318/cysteine 347, cysteine 322/cysteine 328, cysteine 340/cysteine 345, cysteine 383/cysteine 503, cysteine 419/cysteine 435, cysteine 517/cysteine 584, cysteine 548/cysteine 563, and cysteine 574/cysteine 602. N-linked (GlcNAc...) asparagine glycosylation is present at asparagine 127. The N-linked (GlcNAc...) asparagine glycan is linked to asparagine 215. Residue asparagine 308 is glycosylated (N-linked (GlcNAc...) asparagine). The region spanning 391–626 (IVGGTNASLG…YMDWILEKTQ (236 aa)) is the Peptidase S1 domain. The N-linked (GlcNAc...) asparagine glycan is linked to asparagine 396. Residues histidine 434 and aspartate 483 each act as charge relay system in the active site. Asparagine 494 is a glycosylation site (N-linked (GlcNAc...) asparagine). Serine 578 acts as the Charge relay system in catalysis.

It belongs to the peptidase S1 family. Plasma kallikrein subfamily. In terms of assembly, forms a heterodimer with SERPINA5. The zymogen is activated by factor XIIa, which cleaves the molecule into a light chain, which contains the active site, and a heavy chain, which associates with HMW kininogen. These chains are linked by one or more disulfide bonds.

The protein localises to the secreted. The catalysed reaction is Cleaves selectively Arg-|-Xaa and Lys-|-Xaa bonds, including Lys-|-Arg and Arg-|-Ser bonds in (human) kininogen to release bradykinin.. With respect to regulation, inhibited by SERPINA5. Its function is as follows. The enzyme cleaves Lys-Arg and Arg-Ser bonds. It activates, in a reciprocal reaction, factor XII after its binding to a negatively charged surface. It also releases bradykinin from HMW kininogen and may also play a role in the renin-angiotensin system by converting prorenin into renin. The sequence is that of Plasma kallikrein (Klkb1) from Mus musculus (Mouse).